Reading from the N-terminus, the 530-residue chain is Cytochrome P450 2U1 (530 aa).

The next 4 membrane-spanning stretches (helical) occupy residues 21–41, 99–119, 247–267, and 328–348; these read LQAV…DWVW, VYGN…LSDF, ICLH…YLPF, and LFYI…NSLL. C476 lines the heme pocket. Residues 481–501 form a helical membrane-spanning segment; the sequence is LAKMELFLMFVSLMQSFTFAL.

It belongs to the cytochrome P450 family. Requires heme as cofactor. As to expression, specifically expressed in thymus and brain. In brain, expressed in cortex, cerebellum, olfactory bulbs, pons and medulla and the limbic structures (at protein level).

It localises to the endoplasmic reticulum membrane. The protein resides in the microsome membrane. Its subcellular location is the mitochondrion inner membrane. It carries out the reaction an omega-methyl-long-chain fatty acid + reduced [NADPH--hemoprotein reductase] + O2 = an omega-hydroxy-long-chain fatty acid + oxidized [NADPH--hemoprotein reductase] + H2O + H(+). The enzyme catalyses (5Z,8Z,11Z,14Z)-eicosatetraenoate + reduced [NADPH--hemoprotein reductase] + O2 = 19-hydroxy-(5Z,8Z,11Z,14Z)-eicosatetraenoate + oxidized [NADPH--hemoprotein reductase] + H2O + H(+). It catalyses the reaction (5Z,8Z,11Z,14Z)-eicosatetraenoate + reduced [NADPH--hemoprotein reductase] + O2 = 20-hydroxy-(5Z,8Z,11Z,14Z)-eicosatetraenoate + oxidized [NADPH--hemoprotein reductase] + H2O + H(+). The catalysed reaction is N-[(5Z,8Z,11Z,14Z)-eicosatetraenoyl]-serotonin + reduced [NADPH--hemoprotein reductase] + O2 = 2-oxo-N-[(5Z,8Z,11Z,14Z)-eicosatetraenoyl]-serotonin + oxidized [NADPH--hemoprotein reductase] + H2O + H(+). A cytochrome P450 monooxygenase involved in the metabolism of arachidonic acid and its conjugates. Mechanistically, uses molecular oxygen inserting one oxygen atom into a substrate, and reducing the second into a water molecule, with two electrons provided by NADPH via cytochrome P450 reductase (CPR; NADPH-ferrihemoprotein reductase). Acts as an omega and omega-1 hydroxylase for arachidonic acid and possibly for other long chain fatty acids. May modulate the arachidonic acid signaling pathway and play a role in other fatty acid signaling processes. May down-regulate the biological activities of N-arachidonoyl-serotonin, an endocannabinoid that has anti-nociceptive effects through inhibition of fatty acid amide hydrolase FAAH, TRPV1 receptor and T-type calcium channels. Catalyzes C-2 oxidation of the indole ring of N-arachidonoyl-serotonin forming a less active product 2-oxo-N-arachidonoyl-serotonin. The chain is Cytochrome P450 2U1 (Cyp2u1) from Rattus norvegicus (Rat).